A 367-amino-acid chain; its full sequence is Chorismate synthase (367 aa).

Residues arginine 48 and arginine 54 each coordinate NADP(+). Residues 125-127, 238-239, glycine 278, 293-297, and arginine 319 each bind FMN; these read RSS, NA, and KPTSS.

It belongs to the chorismate synthase family. As to quaternary structure, homotetramer. FMNH2 serves as cofactor.

The enzyme catalyses 5-O-(1-carboxyvinyl)-3-phosphoshikimate = chorismate + phosphate. It functions in the pathway metabolic intermediate biosynthesis; chorismate biosynthesis; chorismate from D-erythrose 4-phosphate and phosphoenolpyruvate: step 7/7. Catalyzes the anti-1,4-elimination of the C-3 phosphate and the C-6 proR hydrogen from 5-enolpyruvylshikimate-3-phosphate (EPSP) to yield chorismate, which is the branch point compound that serves as the starting substrate for the three terminal pathways of aromatic amino acid biosynthesis. This reaction introduces a second double bond into the aromatic ring system. This chain is Chorismate synthase, found in Xanthomonas campestris pv. campestris (strain B100).